A 244-amino-acid polypeptide reads, in one-letter code: 5-oxoprolinase subunit A (244 aa).

The protein belongs to the LamB/PxpA family. In terms of assembly, forms a complex composed of PxpA, PxpB and PxpC.

The catalysed reaction is 5-oxo-L-proline + ATP + 2 H2O = L-glutamate + ADP + phosphate + H(+). In terms of biological role, catalyzes the cleavage of 5-oxoproline to form L-glutamate coupled to the hydrolysis of ATP to ADP and inorganic phosphate. The chain is 5-oxoprolinase subunit A from Escherichia coli O157:H7.